Reading from the N-terminus, the 221-residue chain is SIN3-HDAC complex-associated factor (221 aa).

Disordered regions lie at residues 110–153 (KLQK…ASSS) and 201–221 (AAAE…TQEW). Residues 111–121 (LQKEFKRHNSD) show a composition bias toward basic and acidic residues. Over residues 124-135 (STTSSASPAQSP) the composition is skewed to low complexity. A compositionally biased stretch (polar residues) spans 136–153 (CYSNQSDEGSDTEMASSS).

The protein belongs to the SINHCAF family. As to quaternary structure, component of the Sin3/HDAC corepressor complex at least composed of BRMS1, BRMS1L, ING2, SAP30, SAP30L, HDAC1. Found in a complex composed of at least SINHCAF, SIN3A, HDAC1, SAP30, RBBP4, OGT and TET1. Interacts with SIN3A and OGT. In terms of tissue distribution, embryonic stem cells (at protein level).

The protein localises to the nucleus. In terms of biological role, subunit of the Sin3 deacetylase complex (Sin3/HDAC), this subunit is important for the repression of genes encoding components of the TGF-beta signaling pathway. Core component of a SIN3A complex (composed of at least SINHCAF, SIN3A, HDAC1, SAP30, RBBP4, OGT and TET1) present in embryonic stem (ES) cells. Promotes the stability of SIN3A and its presence on chromatin and is essential for maintaining the potential of ES cells to proliferate rapidly, while ensuring a short G1-phase of the cell cycle, thereby preventing premature lineage priming. The sequence is that of SIN3-HDAC complex-associated factor (Sinhcaf) from Mus musculus (Mouse).